The following is a 3462-amino-acid chain: DNA-directed RNA polymerase subunit beta'' (3462 aa).

Positions 263, 335, 342, and 345 each coordinate Zn(2+). Positions 541–1085 are insert-1; sequence KIDDQELSSV…PNKIFSSNLF (545 aa). Positions 1528–1585 are insert-2; the sequence is PQSANERKQILKKARQKLRLFPLNLNEKKNRFSSVTLDLLRDQTTLHKMQSCGEAESG. Residues 1602-1699 form an insert-3 region; sequence KKITEIFTFC…FSKQMGNRLL (98 aa). Positions 1938–2168 are insert-4; it reads LKNKMNQSFS…SQASWILETN (231 aa). An insert-5 region spans residues 2320-2870; sequence NLVSGKLNFL…KKKIAKEGAF (551 aa). The interval 2972–3196 is insert-6; it reads SKSQRGWFHN…IGQLLRYGKE (225 aa).

Belongs to the RNA polymerase beta' chain family. RpoC2 subfamily. In plastids the minimal PEP RNA polymerase catalytic core is composed of four subunits: alpha, beta, beta', and beta''. When a (nuclear-encoded) sigma factor is associated with the core the holoenzyme is formed, which can initiate transcription. Zn(2+) is required as a cofactor.

The protein localises to the plastid. Its subcellular location is the chloroplast. The enzyme catalyses RNA(n) + a ribonucleoside 5'-triphosphate = RNA(n+1) + diphosphate. In terms of biological role, DNA-dependent RNA polymerase catalyzes the transcription of DNA into RNA using the four ribonucleoside triphosphates as substrates. This Tupiella akineta (Green alga) protein is DNA-directed RNA polymerase subunit beta''.